Here is a 251-residue protein sequence, read N- to C-terminus: Triosephosphate isomerase (251 aa).

12 to 14 is a binding site for substrate; sequence NWK. His98 serves as the catalytic Electrophile. Glu168 (proton acceptor) is an active-site residue. Residues Gly174, Ser213, and 234 to 235 contribute to the substrate site; that span reads GG.

This sequence belongs to the triosephosphate isomerase family. Homodimer.

Its subcellular location is the cytoplasm. It carries out the reaction D-glyceraldehyde 3-phosphate = dihydroxyacetone phosphate. It functions in the pathway carbohydrate biosynthesis; gluconeogenesis. Its pathway is carbohydrate degradation; glycolysis; D-glyceraldehyde 3-phosphate from glycerone phosphate: step 1/1. Its function is as follows. Involved in the gluconeogenesis. Catalyzes stereospecifically the conversion of dihydroxyacetone phosphate (DHAP) to D-glyceraldehyde-3-phosphate (G3P). The polypeptide is Triosephosphate isomerase (Afipia carboxidovorans (strain ATCC 49405 / DSM 1227 / KCTC 32145 / OM5) (Oligotropha carboxidovorans)).